Reading from the N-terminus, the 282-residue chain is 2-dehydro-3-deoxyphosphooctonate aldolase (282 aa).

It belongs to the KdsA family.

It localises to the cytoplasm. It catalyses the reaction D-arabinose 5-phosphate + phosphoenolpyruvate + H2O = 3-deoxy-alpha-D-manno-2-octulosonate-8-phosphate + phosphate. It functions in the pathway carbohydrate biosynthesis; 3-deoxy-D-manno-octulosonate biosynthesis; 3-deoxy-D-manno-octulosonate from D-ribulose 5-phosphate: step 2/3. The protein operates within bacterial outer membrane biogenesis; lipopolysaccharide biosynthesis. This chain is 2-dehydro-3-deoxyphosphooctonate aldolase, found in Shewanella pealeana (strain ATCC 700345 / ANG-SQ1).